We begin with the raw amino-acid sequence, 464 residues long: Fumarate hydratase class II (464 aa).

Substrate is bound by residues 98–100 (SGT), 129–132 (HPND), 139–141 (SSN), and Thr187. The Proton donor/acceptor role is filled by His188. Ser318 is an active-site residue. Substrate is bound by residues Ser319 and 324–326 (KVN).

The protein belongs to the class-II fumarase/aspartase family. Fumarase subfamily. As to quaternary structure, homotetramer.

The protein resides in the cytoplasm. It carries out the reaction (S)-malate = fumarate + H2O. The protein operates within carbohydrate metabolism; tricarboxylic acid cycle; (S)-malate from fumarate: step 1/1. Functionally, involved in the TCA cycle. Catalyzes the stereospecific interconversion of fumarate to L-malate. This chain is Fumarate hydratase class II, found in Pasteurella multocida (strain Pm70).